Here is a 111-residue protein sequence, read N- to C-terminus: Large ribosomal subunit protein uL23 (111 aa).

Belongs to the universal ribosomal protein uL23 family. Part of the 50S ribosomal subunit. Contacts protein L29, and trigger factor when it is bound to the ribosome.

In terms of biological role, one of the early assembly proteins it binds 23S rRNA. One of the proteins that surrounds the polypeptide exit tunnel on the outside of the ribosome. Forms the main docking site for trigger factor binding to the ribosome. This is Large ribosomal subunit protein uL23 from Chlamydia trachomatis serovar L2 (strain ATCC VR-902B / DSM 19102 / 434/Bu).